Consider the following 191-residue polypeptide: Peptidyl-tRNA hydrolase (191 aa).

Tyr-16 is a tRNA binding site. The active-site Proton acceptor is His-21. Residues Phe-66, Asn-68, and Asn-114 each coordinate tRNA.

Belongs to the PTH family. Monomer.

The protein localises to the cytoplasm. The catalysed reaction is an N-acyl-L-alpha-aminoacyl-tRNA + H2O = an N-acyl-L-amino acid + a tRNA + H(+). In terms of biological role, hydrolyzes ribosome-free peptidyl-tRNAs (with 1 or more amino acids incorporated), which drop off the ribosome during protein synthesis, or as a result of ribosome stalling. Catalyzes the release of premature peptidyl moieties from peptidyl-tRNA molecules trapped in stalled 50S ribosomal subunits, and thus maintains levels of free tRNAs and 50S ribosomes. This Geotalea uraniireducens (strain Rf4) (Geobacter uraniireducens) protein is Peptidyl-tRNA hydrolase.